The following is a 229-amino-acid chain: 2-C-methyl-D-erythritol 4-phosphate cytidylyltransferase (229 aa).

It belongs to the IspD/TarI cytidylyltransferase family. IspD subfamily.

It catalyses the reaction 2-C-methyl-D-erythritol 4-phosphate + CTP + H(+) = 4-CDP-2-C-methyl-D-erythritol + diphosphate. The protein operates within isoprenoid biosynthesis; isopentenyl diphosphate biosynthesis via DXP pathway; isopentenyl diphosphate from 1-deoxy-D-xylulose 5-phosphate: step 2/6. Functionally, catalyzes the formation of 4-diphosphocytidyl-2-C-methyl-D-erythritol from CTP and 2-C-methyl-D-erythritol 4-phosphate (MEP). In Clostridium botulinum (strain ATCC 19397 / Type A), this protein is 2-C-methyl-D-erythritol 4-phosphate cytidylyltransferase.